A 199-amino-acid chain; its full sequence is Holliday junction branch migration complex subunit RuvA (199 aa).

Residues 1 to 64 (MIALLTGRLA…EDSISLFGFR (64 aa)) form a domain I region. A domain II region spans residues 65–143 (TLAEKEFFQL…KMDVAPSAQE (79 aa)). The flexible linker stretch occupies residues 144 to 154 (APSSEAPAEVA). The domain III stretch occupies residues 154-199 (ADDVASALVNLGYKEAVVRKVLAEMSIEPDASTEAVLRQALKVLMK).

Belongs to the RuvA family. In terms of assembly, homotetramer. Forms an RuvA(8)-RuvB(12)-Holliday junction (HJ) complex. HJ DNA is sandwiched between 2 RuvA tetramers; dsDNA enters through RuvA and exits via RuvB. An RuvB hexamer assembles on each DNA strand where it exits the tetramer. Each RuvB hexamer is contacted by two RuvA subunits (via domain III) on 2 adjacent RuvB subunits; this complex drives branch migration. In the full resolvosome a probable DNA-RuvA(4)-RuvB(12)-RuvC(2) complex forms which resolves the HJ.

The protein resides in the cytoplasm. In terms of biological role, the RuvA-RuvB-RuvC complex processes Holliday junction (HJ) DNA during genetic recombination and DNA repair, while the RuvA-RuvB complex plays an important role in the rescue of blocked DNA replication forks via replication fork reversal (RFR). RuvA specifically binds to HJ cruciform DNA, conferring on it an open structure. The RuvB hexamer acts as an ATP-dependent pump, pulling dsDNA into and through the RuvAB complex. HJ branch migration allows RuvC to scan DNA until it finds its consensus sequence, where it cleaves and resolves the cruciform DNA. The polypeptide is Holliday junction branch migration complex subunit RuvA (Geobacter sulfurreducens (strain ATCC 51573 / DSM 12127 / PCA)).